A 443-amino-acid polypeptide reads, in one-letter code: 23S rRNA (uracil(1939)-C(5))-methyltransferase RlmD (443 aa).

Positions 8–66 (KPLPAEPIAAHIESFAHDGKGIAHVDGRVVFVDGALPGEDVTFVYTEIKRDYAAGRVVE) constitute a TRAM domain. [4Fe-4S] cluster is bound by residues C79, C85, C88, and C167. S-adenosyl-L-methionine-binding residues include Q276, F305, N310, E326, D353, and D374. Catalysis depends on C400, which acts as the Nucleophile.

Belongs to the class I-like SAM-binding methyltransferase superfamily. RNA M5U methyltransferase family. RlmD subfamily.

The enzyme catalyses uridine(1939) in 23S rRNA + S-adenosyl-L-methionine = 5-methyluridine(1939) in 23S rRNA + S-adenosyl-L-homocysteine + H(+). Its function is as follows. Catalyzes the formation of 5-methyl-uridine at position 1939 (m5U1939) in 23S rRNA. The polypeptide is 23S rRNA (uracil(1939)-C(5))-methyltransferase RlmD (Methylococcus capsulatus (strain ATCC 33009 / NCIMB 11132 / Bath)).